Here is a 402-residue protein sequence, read N- to C-terminus: NADH-quinone oxidoreductase subunit D (402 aa).

The protein belongs to the complex I 49 kDa subunit family. In terms of assembly, NDH-1 is composed of 14 different subunits. Subunits NuoB, C, D, E, F, and G constitute the peripheral sector of the complex.

The protein localises to the cell inner membrane. The enzyme catalyses a quinone + NADH + 5 H(+)(in) = a quinol + NAD(+) + 4 H(+)(out). Its function is as follows. NDH-1 shuttles electrons from NADH, via FMN and iron-sulfur (Fe-S) centers, to quinones in the respiratory chain. The immediate electron acceptor for the enzyme in this species is believed to be ubiquinone. Couples the redox reaction to proton translocation (for every two electrons transferred, four hydrogen ions are translocated across the cytoplasmic membrane), and thus conserves the redox energy in a proton gradient. This chain is NADH-quinone oxidoreductase subunit D, found in Cereibacter sphaeroides (strain ATCC 17025 / ATH 2.4.3) (Rhodobacter sphaeroides).